The chain runs to 782 residues: Homeotic protein proboscipedia (782 aa).

6 disordered regions span residues 1-23, 153-195, 251-336, 358-380, 439-493, and 547-586; these read MQEVCSSLDTTSMGTQIKSESPL, PQTP…VPEN, MKHK…GISS, SSVSLDEDIEESSPIKVKKKDDG, IATP…QQQP, and YYNYNDTNGTPYLNHQQQHHHHAQHHQQQQHHQNHVADFE. The Antp-type hexapeptide signature appears at 164–169; it reads EYPWMK. Positions 198 to 257 form a DNA-binding region, homeobox; the sequence is PRRLRTAYTNTQLLELEKEFHFNKYLCRPRRIEIAASLDLTERQVKVWFQNRRMKHKRQT. The segment covering 308-321 has biased composition (low complexity); the sequence is NNNTPSATNNNPSA. Polar residues predominate over residues 322-336; the sequence is GNLTPNSSLETGISS. The span at 452–463 shows a compositional bias: gly residues; it reads NGSGGGPAGGYF. Residues 464–493 show a composition bias toward low complexity; that stretch reads PGYYPSPKQQQQVQQQQLHPQQQQLPQQQP. Residues 563-580 show a composition bias toward basic residues; that stretch reads QQHHHHAQHHQQQQHHQN.

This sequence belongs to the Antp homeobox family. Proboscipedia subfamily.

The protein resides in the nucleus. Sequence-specific transcription factor which is part of a developmental regulatory system that provides cells with specific positional identities on the anterior-posterior axis. Controls development of mouthparts, and labial and maxillary palps. This Drosophila melanogaster (Fruit fly) protein is Homeotic protein proboscipedia (pb).